The chain runs to 420 residues: Torsin-4A-A (420 aa).

A helical membrane pass occupies residues 130–150 (CLLLFIGIVCFQILNAIENLD). 202–209 (GPSGVGKS) contacts ATP.

This sequence belongs to the ClpA/ClpB family. Torsin subfamily.

It is found in the membrane. This is Torsin-4A-A (tor4a-a) from Xenopus laevis (African clawed frog).